Consider the following 760-residue polypeptide: Transmembrane channel-like protein 1 (760 aa).

The tract at residues 1–80 (MSPKKVQIKV…RRRRLKRGAE (80 aa)) is disordered. The Cytoplasmic segment spans residues 1 to 182 (MSPKKVQIKV…KIKAIESQFG (182 aa)). A compositionally biased stretch (acidic residues) spans 13-29 (KEDETEESSSEEEEEVE). The span at 30–39 (DKLPRRESLR) shows a compositional bias: basic and acidic residues. Phosphoserine is present on S37. T45 bears the Phosphothreonine mark. A compositionally biased stretch (acidic residues) spans 50–61 (NEDDPEPEPEDE). S128 is subject to Phosphoserine. The chain crosses the membrane as a helical span at residues 183 to 220 (SSVASYFLFLRWMYGVNMVLFILTFSLIMLPEYLWGLP). The Extracellular segment spans residues 221 to 271 (YGSLPRKTVPRAEEASAANFGVLYDFNGLAQYSVLFYGYYDNKRTIGWMNF). The helical transmembrane segment at 272–303 (RLPLSYFLVGIMCIGYSFLVVLKAMTKNIGDD) threads the bilayer. Residues 304 to 359 (GGGDDNTFNFSWKVFTSWDYLIGNPETADNKFNSITMNFKEAITEEKAAQVEENVH) are Cytoplasmic-facing. S314 carries the post-translational modification Phosphoserine. Residues 360–390 (LIRFLRFLANFFVFLTLGGSGYLIFWAVKRS) form a helical membrane-spanning segment. The Extracellular segment spans residues 391–402 (QEFAQQDPDTLG). Phosphothreonine is present on T400. A helical transmembrane segment spans residues 403-430 (WWEKNEMNMVMSLLGMFCPTLFDLFAEL). Topologically, residues 431 to 434 (EDYH) are cytoplasmic. Residues 435–469 (PLIALKWLLGRIFALLLGNLYVFILALMDEINNKI) traverse the membrane as a helical segment. Residues 470-515 (EEEKLVKANITLWEANMIKAYNASFSENSTGPPFFVHPADVPRGPC) lie on the Extracellular side of the membrane. A helical membrane pass occupies residues 516-553 (WETMVGQEFVRLTVSDVLTTYVTILIGDFLRACFVRFC). The Cytoplasmic segment spans residues 554–572 (NYCWCWDLEYGYPSYTEFD). A helical transmembrane segment spans residues 573-593 (ISGNVLALIFNQGMIWMGSFF). At 594–596 (APS) the chain is on the extracellular side. The helical transmembrane segment at 597-619 (LPGINILRLHTSMYFQCWAVMCC) threads the bilayer. Over 620–633 (NVPEARVFKASRSN) the chain is Cytoplasmic. A helical membrane pass occupies residues 634-657 (NFYLGMLLLILFLSTMPVLYMIVS). Topologically, residues 658–700 (LPPSFDCGPFSGKNRMFEVIGETLEHDFPSWMAKILRQLSNPG) are extracellular. A helical membrane pass occupies residues 701–734 (LVIAVILVMVLAIYYLNATAKGQKAANLDLKKKM). At 735-760 (KMQALENKMRNKKMAAARAAAAAGRQ) the chain is on the cytoplasmic side.

This sequence belongs to the TMC family. Forms the MET channel complosed of TMC dimer (TMC1 or TMC2), TMIE, TOMT, CIB (CIB2 or CIB3), LHFPL5 and PDH15. The interaction of TMC1 and TMC2 with TOMT is required for the transportation of TMC1/2 into the stereocilia of hair cells. Interacts (via N-terminus) with both isoforms CD1 and CD3 of PCDH15. Can form a heterodimer with TMC2, TMC5 or TMC7. As to expression, detected in fetal cochlea, and at low levels in placenta and testis.

It is found in the cell membrane. The catalysed reaction is Ca(2+)(in) = Ca(2+)(out). In terms of biological role, pore-forming subunit of the mechanotransducer (MET) non-selective cation channel complex located at the tips of stereocilia of cochlear hair cells and that mediates sensory transduction in the auditory system. The MET complex is composed of two dimeric pore-forming ion-conducting transmembrane TMC (TMC1 or TMC2) subunits, and aided by several auxiliary proteins including LHFPL5, TMIE, CIB2/3 and TOMT, and the tip-link PCDH15. MET channel is activated by tension in the tip-link extending from the side wall of one stereocilium to the tip of the adjacent shorter stereocilium, where the channel is located. TMC1 MET channel is highly permeable to calcium and likely transports monovalent cations. Also involved in vestibular hair cells transduction current. The sequence is that of Transmembrane channel-like protein 1 from Homo sapiens (Human).